A 277-amino-acid polypeptide reads, in one-letter code: Basic leucine zipper transcriptional factor ATF-like 2 (277 aa).

Disordered regions lie at residues 15–50, 126–146, and 191–256; these read LGESQKQLKKKQKNRVAAQRSRQKHTSKADALHQQH, FQTPGSSPRAQHLSPGPCSHE, and SFSK…QKSS. The region spanning 18 to 81 is the bZIP domain; sequence SQKQLKKKQK…AGWGRTLHLH (64 aa). Residues 20–42 form a basic motif region; sequence KQLKKKQKNRVAAQRSRQKHTSK. A compositionally biased stretch (basic and acidic residues) spans 41-50; that stretch reads SKADALHQQH. Residues 46 to 67 are leucine-zipper; it reads LHQQHESLEKQNHALRKEIQAL. Composition is skewed to polar residues over residues 213-227 and 247-256; these read RQEQPTSGRLASSDS and GSSTHWQKSS.

This sequence belongs to the bZIP family. In terms of assembly, heterodimer; heterodimerizes with JUN family proteins.

Its subcellular location is the nucleus. AP-1 family transcription factor that controls the differentiation of lineage-specific cells in the immune system. Selectively suppresses CCN1 transcription and hence blocks the downstream cell proliferation signals produced by CCN1 and inhibits CCN1-induced anchorage-independent growth and invasion in several cancer types. Possibly acts by interfering with AP-1 binding to CCN1 promoter. Following infection, participates in the differentiation of CD8(+) thymic conventional dendritic cells in the immune system. Acts via the formation of a heterodimer with JUN family proteins that recognizes and binds DNA sequence 5'-TGA[CG]TCA-3' and regulates expression of target genes. In Mus musculus (Mouse), this protein is Basic leucine zipper transcriptional factor ATF-like 2 (Batf2).